Here is a 447-residue protein sequence, read N- to C-terminus: Exodeoxyribonuclease 7 large subunit (447 aa).

This sequence belongs to the XseA family. In terms of assembly, heterooligomer composed of large and small subunits.

Its subcellular location is the cytoplasm. The enzyme catalyses Exonucleolytic cleavage in either 5'- to 3'- or 3'- to 5'-direction to yield nucleoside 5'-phosphates.. Its function is as follows. Bidirectionally degrades single-stranded DNA into large acid-insoluble oligonucleotides, which are then degraded further into small acid-soluble oligonucleotides. The sequence is that of Exodeoxyribonuclease 7 large subunit from Pediococcus pentosaceus (strain ATCC 25745 / CCUG 21536 / LMG 10740 / 183-1w).